The following is a 613-amino-acid chain: Zinc finger CCCH domain-containing protein 59 (613 aa).

The disordered stretch occupies residues 275-296 (NTTLSPYISPAKSVPVEETPKR). 2 consecutive C3H1-type zinc fingers follow at residues 318-346 (AGGNRLCFKFTSSGSCPRGSKCNYRHDEE) and 350-378 (HYNRNVCFDFLNKGKCEKGPECRFAHSLS).

This is Zinc finger CCCH domain-containing protein 59 from Oryza sativa subsp. japonica (Rice).